Consider the following 315-residue polypeptide: Secreted mono- and diacylglycerol lipase LIP2 (315 aa).

Positions Met-1–Ala-21 are cleaved as a signal peptide. A disulfide bond links Cys-68 and Cys-308. Residue Asn-74 is glycosylated (N-linked (GlcNAc...) asparagine). Ser-182 serves as the catalytic Nucleophile. The active site involves Asp-240. An N-linked (GlcNAc...) asparagine glycan is attached at Asn-265. His-292 is a catalytic residue.

It belongs to the AB hydrolase superfamily. Lipase family. Class 3 subfamily.

It is found in the secreted. The catalysed reaction is a monoacylglycerol + H2O = glycerol + a fatty acid + H(+). It carries out the reaction a diacylglycerol + H2O = a monoacylglycerol + a fatty acid + H(+). Functionally, secreted lipase involved in Dandruff and seborrheic dermatitis (D/SD) probably via lipase-mediated breakdown of sebaceous lipids and release of irritating free fatty acids. Shows activity against monoglyceride and diglyceride substrates and generates free oleic acid from the substrates mono- and diolein. Able to cleave the oleic acid from both the 1 and the 2 position of the glycerol backbone as 1,2 isomers of diolein were converted into oleic acid and glycerol. Due to an absence of fatty acid synthase genes in Malassezia species, secretory lipases are essential for the yeast to generate free fatty acids from degradation of sebum and assimilate them as lipid sources for growth. Plays an essential role at the pathogen-host interface during disease progression. Also performs the reverse reaction to build diacylglycerols from monoacylglycerols. This chain is Secreted mono- and diacylglycerol lipase LIP2, found in Malassezia restricta (strain ATCC 96810 / NBRC 103918 / CBS 7877) (Seborrheic dermatitis infection agent).